Reading from the N-terminus, the 494-residue chain is Serine/arginine-rich splicing factor 4 (494 aa).

The region spanning 2–72 (PRVYIGRLSY…ERVIVEHARG (71 aa)) is the RRM 1 domain. 2 disordered regions span residues 72 to 95 (GPRRDGSYGSGRSGYGYRRSGRDK) and 169 to 494 (KIRL…HSRS). A phosphoserine mark is found at Ser78 and Ser84. The RRM 2 domain maps to 104-177 (YRLIVENLSS…RKIRLVEDKP (74 aa)). Basic residues-rich tracts occupy residues 179 to 206 (SRRRRSYSRSRSHSRSRSRSRHSRKSRS) and 214 to 246 (SHSKSRSRSRSGSRSRSKSRSRSQSRSRSKKEK). Over residues 247–256 (SRSPSKEKSR) the composition is skewed to basic and acidic residues. Positions 257-267 (SRSHSAGKSRS) are enriched in basic residues. A compositionally biased stretch (basic and acidic residues) spans 268 to 278 (KSKDQAEEKIQ). Residues 286–302 (PKSRSPSRHKSKSKSRS) show a composition bias toward basic residues. A phosphoserine mark is found at Ser288, Ser290, and Ser292. The span at 303–327 (RSQERRVEEEKRGSVSRGRSQEKSL) shows a compositional bias: basic and acidic residues. Basic residues-rich tracts occupy residues 328–359 (RQSRSRSRSKGGSRSRSRSRSKSKDKRKGRKR) and 367–382 (RSRSRSKSERSRKRGS). Residues 411–431 (VSKEREHAKSESSQREGRGES) are compositionally biased toward basic and acidic residues. Phosphoserine is present on residues Ser431, Ser446, Ser456, Ser458, and Ser460. Low complexity predominate over residues 449–460 (KSKPNLPSESRS). A compositionally biased stretch (basic residues) spans 461 to 494 (RSKSASKTRSRSKSRSRSASRSPSRSRSRSHSRS).

The protein belongs to the splicing factor SR family. In terms of assembly, found in a pre-mRNA splicing complex with SRSF4/SFRS4, SRSF5/SFRS5, SNRNP70, SNRPA1, SRRM1 and SRRM2. Interacts with PNN. Extensively phosphorylated on serine residues in the RS domain.

The protein resides in the nucleus speckle. Plays a role in alternative splice site selection during pre-mRNA splicing. Represses the splicing of MAPT/Tau exon 10. This Homo sapiens (Human) protein is Serine/arginine-rich splicing factor 4 (SRSF4).